The primary structure comprises 152 residues: Superoxide dismutase [Cu-Zn] (152 aa).

3 residues coordinate Cu cation: histidine 45, histidine 47, and histidine 62. The cysteines at positions 56 and 145 are disulfide-linked. Zn(2+) is bound by residues histidine 62, histidine 70, histidine 79, and aspartate 82. Position 119 (histidine 119) interacts with Cu cation.

Belongs to the Cu-Zn superoxide dismutase family. In terms of assembly, homodimer. Requires Cu cation as cofactor. Zn(2+) is required as a cofactor.

It is found in the cytoplasm. It catalyses the reaction 2 superoxide + 2 H(+) = H2O2 + O2. Its function is as follows. Destroys radicals which are normally produced within the cells and which are toxic to biological systems. This Paulownia kawakamii (Dragon tree) protein is Superoxide dismutase [Cu-Zn] (SODCC).